A 67-amino-acid polypeptide reads, in one-letter code: Sec-independent protein translocase protein TatA (67 aa).

The helical transmembrane segment at 1–21 (MMPGPFELIVILVIVLLLFGG) threads the bilayer.

This sequence belongs to the TatA/E family. In terms of assembly, the Tat system comprises two distinct complexes: a TatABC complex, containing multiple copies of TatA, TatB and TatC subunits, and a separate TatA complex, containing only TatA subunits. Substrates initially bind to the TatABC complex, which probably triggers association of the separate TatA complex to form the active translocon.

Its subcellular location is the cell inner membrane. Its function is as follows. Part of the twin-arginine translocation (Tat) system that transports large folded proteins containing a characteristic twin-arginine motif in their signal peptide across membranes. TatA could form the protein-conducting channel of the Tat system. This Ruthia magnifica subsp. Calyptogena magnifica protein is Sec-independent protein translocase protein TatA.